Here is an 872-residue protein sequence, read N- to C-terminus: Cadherin-1 (872 aa).

The N-terminal stretch at 1–25 is a signal peptide; that stretch reads MGLKRPWLLGAVVLLTLIQVQGGLA. Positions 26-148 are excised as a propeptide; sequence EWTQCRMGFS…SETGLKRQKR (123 aa). 5 Cadherin domains span residues 148 to 256, 257 to 370, 371 to 481, 482 to 589, and 605 to 688; these read RDWV…DPVF, TQSV…PPVF, DPTQ…APIF, LPPV…GPFL, and VFTI…MQCE. Over 149 to 701 the chain is Extracellular; it reads DWVIPPIIVS…AIAGGLGISA (553 aa). Asn209 is a glycosylation site (N-linked (GlcNAc...) asparagine). Residues Asp251 and Asp282 each contribute to the Ca(2+) site. N-linked (GlcNAc...) asparagine glycosylation is found at Asn456, Asn552, Asn631, and Asn669. A helical membrane pass occupies residues 702–722; that stretch reads IVGILGGILALLLLLLLLLLF. Topologically, residues 723 to 872 are cytoplasmic; that stretch reads VRRKKVVKEP…LADMYGGDED (150 aa). A disordered region spans residues 739–758; it reads ETRDNVFSYDEEGGGEEDQD. The segment covering 747-758 has biased composition (acidic residues); it reads YDEEGGGEEDQD.

In terms of assembly, homodimer. In terms of tissue distribution, abundantly expressed in intestine, stomach, liver, kidney, skin and eye. Also expressed in heart, lung, testis, ovary, muscle and brain.

The protein localises to the cell junction. It is found in the adherens junction. It localises to the cell membrane. Its subcellular location is the endosome. The protein resides in the golgi apparatus. The protein localises to the trans-Golgi network. It is found in the cytoplasm. It localises to the desmosome. Its function is as follows. Cadherins are calcium-dependent cell adhesion proteins. They preferentially interact with themselves in a homophilic manner in connecting cells; cadherins may thus contribute to the sorting of heterogeneous cell types. Promotes organization of radial actin fiber structure and cellular response to contractile forces, via anchoring of radial actin fibers to CDH1 junction complexes at the cell membrane. E-cadherin is a ligand for integrin alpha-E/beta-7. This is Cadherin-1 (cdh1) from Xenopus laevis (African clawed frog).